Consider the following 600-residue polypeptide: Elongation factor 4 (600 aa).

The region spanning 6 to 188 is the tr-type G domain; it reads KLIRNFSIIA…AVVERIPAPK (183 aa). Residues 18 to 23 and 135 to 138 contribute to the GTP site; these read DHGKST and NKID.

It belongs to the TRAFAC class translation factor GTPase superfamily. Classic translation factor GTPase family. LepA subfamily.

The protein localises to the cell inner membrane. It carries out the reaction GTP + H2O = GDP + phosphate + H(+). In terms of biological role, required for accurate and efficient protein synthesis under certain stress conditions. May act as a fidelity factor of the translation reaction, by catalyzing a one-codon backward translocation of tRNAs on improperly translocated ribosomes. Back-translocation proceeds from a post-translocation (POST) complex to a pre-translocation (PRE) complex, thus giving elongation factor G a second chance to translocate the tRNAs correctly. Binds to ribosomes in a GTP-dependent manner. The polypeptide is Elongation factor 4 (Sorangium cellulosum (strain So ce56) (Polyangium cellulosum (strain So ce56))).